The following is a 549-amino-acid chain: Alpha-amylase (549 aa).

An N-terminal signal peptide occupies residues 1-34 (MLTFHRIIRKGWMFLLAFLLTALLFCPTGQPAKA). Ca(2+) is bound by residues D139, D196, A218, D220, D231, and D237. Position 196 (D196) interacts with Na(+). The Na(+) site is built by D220, D231, D237, and L238. Residue D239 coordinates Ca(2+). D268 functions as the Nucleophile in the catalytic mechanism. H272 contributes to the Ca(2+) binding site. The active-site Proton donor is the E298. The Ca(2+) site is built by G337, F339, S440, D441, and D464.

It belongs to the glycosyl hydrolase 13 family. Monomer. The cofactor is Ca(2+). Requires Na(+) as cofactor.

It is found in the secreted. It carries out the reaction Endohydrolysis of (1-&gt;4)-alpha-D-glucosidic linkages in polysaccharides containing three or more (1-&gt;4)-alpha-linked D-glucose units.. The sequence is that of Alpha-amylase (amyS) from Geobacillus stearothermophilus (Bacillus stearothermophilus).